The sequence spans 259 residues: HTH-type quorum sensing-dependent transcriptional regulator VjbR (259 aa).

The tract at residues 76–179 (KNYFAIDPVF…AGIIHGTVCG (104 aa)) is C12-HSL binding. The HTH luxR-type domain occupies 183 to 248 (ANSVASLLTP…SAVATALSLG (66 aa)). Residues 207–226 (DGEIAEILSIARWTVVTYLQ) constitute a DNA-binding region (H-T-H motif).

Functionally, transcriptional regulator involved in the global control of Brucella gene expression. Mediates the effects of the quorum sensing autoinducer C12-HSL (N-dodecanoyl-homoserine lactone) on a large and diverse number of genes. The sequence is that of HTH-type quorum sensing-dependent transcriptional regulator VjbR (vjbR) from Brucella ovis (strain ATCC 25840 / 63/290 / NCTC 10512).